The following is a 152-amino-acid chain: Diamine acetyltransferase (152 aa).

Residues F5–D152 enclose the N-acetyltransferase domain. Y127 acts as the Proton donor in catalysis.

The protein belongs to the acetyltransferase family. Homotetramer.

It is found in the cytoplasm. It carries out the reaction an alkane-alpha,omega-diamine + acetyl-CoA = an N-acetylalkane-alpha,omega-diamine + CoA + H(+). It functions in the pathway amine and polyamine degradation; putrescine degradation; N-acetylputrescine from putrescine: step 1/1. Functionally, enzyme which catalyzes the acetylation of polyamines. Displays higher substrate specificity for spermine than for spermidine. May function to acetylate host-derived polyamines, thus alleviating the necessity for de novo synthesis of these molecules. In Cryptosporidium parvum (strain Iowa II), this protein is Diamine acetyltransferase.